A 445-amino-acid chain; its full sequence is Exodeoxyribonuclease 7 large subunit (445 aa).

Belongs to the XseA family. Heterooligomer composed of large and small subunits.

It is found in the cytoplasm. It carries out the reaction Exonucleolytic cleavage in either 5'- to 3'- or 3'- to 5'-direction to yield nucleoside 5'-phosphates.. Its function is as follows. Bidirectionally degrades single-stranded DNA into large acid-insoluble oligonucleotides, which are then degraded further into small acid-soluble oligonucleotides. This is Exodeoxyribonuclease 7 large subunit from Delftia acidovorans (strain DSM 14801 / SPH-1).